A 436-amino-acid chain; its full sequence is Na(+)/H(+) antiporter NhaA 2 (436 aa).

11 helical membrane-spanning segments follow: residues 35 to 55, 80 to 100, 116 to 136, 147 to 167, 176 to 196, 201 to 221, 226 to 246, 283 to 303, 313 to 333, 354 to 374, and 385 to 405; these read FGGG…NSPW, LATW…GLEL, ALPV…YVGI, GWAI…AVIG, AFLL…IAIF, FKLT…LLVQ, WWWA…ESGV, VSAG…SLRG, PIVV…IFGS, LLGV…IGEL, and VKAA…AVLS.

Belongs to the NhaA Na(+)/H(+) (TC 2.A.33) antiporter family.

The protein resides in the cell membrane. It carries out the reaction Na(+)(in) + 2 H(+)(out) = Na(+)(out) + 2 H(+)(in). In terms of biological role, na(+)/H(+) antiporter that extrudes sodium in exchange for external protons. The sequence is that of Na(+)/H(+) antiporter NhaA 2 from Salinispora arenicola (strain CNS-205).